The primary structure comprises 310 residues: Receptor homology region, transmembrane domain- and RING domain-containing protein 1 (310 aa).

Positions 1–25 (MRLVVSSCLLVAAPFLSSLLRVSLA) are cleaved as a signal peptide. The Lumenal segment spans residues 26–168 (TVVLNSISAS…NPPDRGSAWT (143 aa)). An intrachain disulfide couples cysteine 65 to cysteine 92. A glycan (N-linked (GlcNAc...) asparagine) is linked at asparagine 75. The region spanning 81-149 (TTKFALIIRG…VAGEILRKYA (69 aa)) is the PA domain. Residues 169–189 (VLAISFFSLLLIVTFLLIAFF) traverse the membrane as a helical segment. Topologically, residues 190 to 310 (APRHWTQWRG…FAFAQSSQSR (121 aa)) are cytoplasmic. The segment at 232-274 (CAICLEDYRFGESLRLLPCQHAFHLNCIDSWLTKWGTSCPVCK) adopts an RING-type; atypical zinc-finger fold. A compositionally biased stretch (basic and acidic residues) spans 284 to 293 (SEVHKRESPR). A disordered region spans residues 284–310 (SEVHKRESPRTDTSTSRFAFAQSSQSR). Residues 294–310 (TDTSTSRFAFAQSSQSR) are compositionally biased toward polar residues.

Expressed in leaves, stems, flowers and siliques.

Its subcellular location is the prevacuolar compartment membrane. The protein localises to the protein storage vacuole membrane. It is found in the golgi apparatus membrane. Involved in the trafficking of vacuolar proteins. Functions probably as a sorting receptor for protein trafficking to the protein storage vacuole (PSV) by binding the C-terminal vacuolar sorting determinant (VSD) of vacuolar-sorted proteins. This Arabidopsis thaliana (Mouse-ear cress) protein is Receptor homology region, transmembrane domain- and RING domain-containing protein 1 (RMR1).